Consider the following 188-residue polypeptide: MSMENSPLKYQLLVAMPQMADPDFEHSVTYIVEHSSEGAMGLTLNRPVQISLGDILSDMDIEIEVPPSERHRVVAGGPVQQEAGFVLHSAATRWHASIPLSDGLILTTSRDILEAIAIGEGPEQSLICLGYAGWDAGQLEQELVDNAWLSTPASRELVLETPFEQTWHAAAARIGVDMSLIATQAGHC.

The protein belongs to the UPF0301 (AlgH) family.

The chain is UPF0301 protein ABO_0112 from Alcanivorax borkumensis (strain ATCC 700651 / DSM 11573 / NCIMB 13689 / SK2).